A 424-amino-acid chain; its full sequence is GTPase Obg (424 aa).

An Obg domain is found at 1-158 (MFIDTAKIFV…RWIKLELKLL (158 aa)). Positions 159–331 (ADVGLIGFPN…LMKEAARLLS (173 aa)) constitute an OBG-type G domain. GTP-binding positions include 165 to 172 (GFPNVGKS), 190 to 194 (FTTLK), 212 to 215 (DIPG), 282 to 285 (NKSD), and 312 to 314 (SAA). Mg(2+)-binding residues include Ser-172 and Thr-192. The OCT domain occupies 345 to 424 (RFIEEEKRFT…LNDFEFDFLL (80 aa)).

The protein belongs to the TRAFAC class OBG-HflX-like GTPase superfamily. OBG GTPase family. Monomer. Mg(2+) is required as a cofactor.

The protein resides in the cytoplasm. An essential GTPase which binds GTP, GDP and possibly (p)ppGpp with moderate affinity, with high nucleotide exchange rates and a fairly low GTP hydrolysis rate. Plays a role in control of the cell cycle, stress response, ribosome biogenesis and in those bacteria that undergo differentiation, in morphogenesis control. In Clostridium botulinum (strain Langeland / NCTC 10281 / Type F), this protein is GTPase Obg.